A 2962-amino-acid chain; its full sequence is Sex determination and dosage compensation protein sdc-2 (2962 aa).

Disordered regions lie at residues 1-28 (MSDE…ADPD) and 1061-1110 (DKRS…QVDP). A compositionally biased stretch (acidic residues) spans 15-27 (SFNESDSPDEADP). Coiled-coil stretches lie at residues 995–1085 (LESA…LADK) and 1140–1268 (REER…KRVS). Disordered stretches follow at residues 1535-1554 (PASL…GSPV) and 2198-2227 (LDSS…NQLD). Over residues 2212 to 2225 (FEDSPSEDENDENQ) the composition is skewed to acidic residues.

As to quaternary structure, component of the SDC complex, which consists of sdc-1, sdc-2 and sdc-3. Within the complex, interacts with sdc-1 and sdc-3. In terms of tissue distribution, expressed in hermaphrodites (XX), but absent in males (XO) (at protein level).

Its subcellular location is the chromosome. In terms of biological role, component of the SDC complex that functions in sex determination and in X chromosome dosage compensation specifically in hermaphrodite (XX) animals. Required for the recruitment of the condensin I-like dosage compensation complex to the male sex-determining autosomal gene her-1, thereby contributing to its repression and initiating hermaphrodite sexual development. Plays a central role in X-chromosome recognition and in the recruitment and assembly of the dosage compensation complex and the dosage compensation protein dpy-21 onto the X chromosomes in hermaphrodites, which leads to a reduction of X-linked gene transcription and an equalization of X-linked gene expression between the sexes. May confer protection against toxicity induced by heavy metals such as arsenite. The sequence is that of Sex determination and dosage compensation protein sdc-2 from Caenorhabditis elegans.